We begin with the raw amino-acid sequence, 57 residues long: Small ribosomal subunit protein eS31 (57 aa).

Zn(2+) is bound by residues Cys-29, Cys-32, Cys-47, and Cys-50. The segment at 29 to 50 (CPRCGPGVFMANHKDRWSCGRC) adopts a C4-type zinc-finger fold.

This sequence belongs to the eukaryotic ribosomal protein eS31 family. In terms of assembly, part of the 30S ribosomal subunit. It depends on Zn(2+) as a cofactor.

This chain is Small ribosomal subunit protein eS31, found in Thermococcus kodakarensis (strain ATCC BAA-918 / JCM 12380 / KOD1) (Pyrococcus kodakaraensis (strain KOD1)).